The sequence spans 270 residues: MTLKIAIAGAGGRMGRQLIQAVHSAEGVELGAAFERKGSSLVGTDAGELAGIGHLGVAVSDDLESQKDKFDLLIDFTRPEGSLEHIAFCVANNKKMVIGTTGFDQNGKAAIKAASDKIAIVFASNFSVGVNLVFKLLEKAAKVMGDYCDIEVIEAHHRHKVDAPSGTALSMGEHIAKTLGRDLKTHGVFCREGITGERKRDEIGFSTIRASDVVGEHTVWFADIGERVEISHKASSRMTFANGAVRAGKWLENKANGLFDMTDVLDLNNL.

Residues 9–14 and glutamate 35 contribute to the NAD(+) site; that span reads GAGGRM. Arginine 36 is a binding site for NADP(+). NAD(+) contacts are provided by residues 99–101 and 123–126; these read GTT and ASNF. The active-site Proton donor/acceptor is histidine 156. Position 157 (histidine 157) interacts with (S)-2,3,4,5-tetrahydrodipicolinate. Catalysis depends on lysine 160, which acts as the Proton donor. 166 to 167 lines the (S)-2,3,4,5-tetrahydrodipicolinate pocket; sequence GT.

The protein belongs to the DapB family.

The protein resides in the cytoplasm. The catalysed reaction is (S)-2,3,4,5-tetrahydrodipicolinate + NAD(+) + H2O = (2S,4S)-4-hydroxy-2,3,4,5-tetrahydrodipicolinate + NADH + H(+). It catalyses the reaction (S)-2,3,4,5-tetrahydrodipicolinate + NADP(+) + H2O = (2S,4S)-4-hydroxy-2,3,4,5-tetrahydrodipicolinate + NADPH + H(+). Its pathway is amino-acid biosynthesis; L-lysine biosynthesis via DAP pathway; (S)-tetrahydrodipicolinate from L-aspartate: step 4/4. Catalyzes the conversion of 4-hydroxy-tetrahydrodipicolinate (HTPA) to tetrahydrodipicolinate. The sequence is that of 4-hydroxy-tetrahydrodipicolinate reductase from Haemophilus influenzae (strain 86-028NP).